A 498-amino-acid chain; its full sequence is ATP synthase subunit beta, chloroplastic (498 aa).

Position 172–179 (172–179 (GGAGVGKT)) interacts with ATP.

This sequence belongs to the ATPase alpha/beta chains family. In terms of assembly, F-type ATPases have 2 components, CF(1) - the catalytic core - and CF(0) - the membrane proton channel. CF(1) has five subunits: alpha(3), beta(3), gamma(1), delta(1), epsilon(1). CF(0) has four main subunits: a(1), b(1), b'(1) and c(9-12).

The protein resides in the plastid. It is found in the chloroplast thylakoid membrane. It catalyses the reaction ATP + H2O + 4 H(+)(in) = ADP + phosphate + 5 H(+)(out). Produces ATP from ADP in the presence of a proton gradient across the membrane. The catalytic sites are hosted primarily by the beta subunits. In Nymphaea odorata (White water lily), this protein is ATP synthase subunit beta, chloroplastic.